The chain runs to 204 residues: Ribonuclease HII (204 aa).

The 197-residue stretch at 1–197 (MILGIDEAGR…KNRILNPKLL (197 aa)) folds into the RNase H type-2 domain. Residues aspartate 6, glutamate 7, and aspartate 103 each coordinate a divalent metal cation.

It belongs to the RNase HII family. Mn(2+) serves as cofactor. Requires Mg(2+) as cofactor.

It localises to the cytoplasm. The enzyme catalyses Endonucleolytic cleavage to 5'-phosphomonoester.. Functionally, endonuclease that specifically degrades the RNA of RNA-DNA hybrids. The chain is Ribonuclease HII from Helicobacter pylori (strain G27).